The sequence spans 415 residues: Dynein assembly factor with WD repeat domains 1 (415 aa).

WD repeat units lie at residues 90–129 (AHIL…ELHT), 132–172 (GHRN…CFYT), 175–214 (GHTA…EVST), 217–256 (GHFA…KVHV), 259–298 (GHRG…CLAT), 301–340 (GHND…CLCQ), 343–384 (GHKG…QVLE), and 385–415 (GHSD…RIWH).

This sequence belongs to the WD repeat WDR69 family. Expressed in organs bearing motile cilia, including the pronephros, otic vesicles and Kupffer's vesicle.

It is found in the cytoplasm. Its subcellular location is the cytoskeleton. The protein localises to the flagellum basal body. It localises to the flagellum axoneme. In terms of biological role, required for axonemal dynein assembly and ciliary motility in ciliated organs, including Kupffer's vesicle, during embryogenesis. Facilitates the onset of robust cilia motility during development. This chain is Dynein assembly factor with WD repeat domains 1 (daw1), found in Danio rerio (Zebrafish).